A 384-amino-acid chain; its full sequence is S-adenosylmethionine synthase (384 aa).

His15 contributes to the ATP binding site. Asp17 is a Mg(2+) binding site. Glu43 is a binding site for K(+). L-methionine contacts are provided by Glu56 and Gln99. Positions 99–109 are flexible loop; it reads QSADINQGVDR. ATP is bound by residues 164–166, 230–231, Asp239, 245–246, Ala262, and Lys266; these read DAK, RF, and RK. Asp239 is an L-methionine binding site. Lys270 is a binding site for L-methionine.

This sequence belongs to the AdoMet synthase family. As to quaternary structure, homotetramer; dimer of dimers. Mg(2+) is required as a cofactor. It depends on K(+) as a cofactor.

Its subcellular location is the cytoplasm. It carries out the reaction L-methionine + ATP + H2O = S-adenosyl-L-methionine + phosphate + diphosphate. It participates in amino-acid biosynthesis; S-adenosyl-L-methionine biosynthesis; S-adenosyl-L-methionine from L-methionine: step 1/1. In terms of biological role, catalyzes the formation of S-adenosylmethionine (AdoMet) from methionine and ATP. The overall synthetic reaction is composed of two sequential steps, AdoMet formation and the subsequent tripolyphosphate hydrolysis which occurs prior to release of AdoMet from the enzyme. The sequence is that of S-adenosylmethionine synthase from Haemophilus influenzae (strain ATCC 51907 / DSM 11121 / KW20 / Rd).